The following is a 522-amino-acid chain: MARSRAFAFALLICAVAASCHVALSAPPPYAKQVERDFLTCLTKDIPPRQLYAKSSPAYASVWSSTVRNIKFLSDKTVKPLYIITPTNASHIQAAVVCGRRHGMRIRVRSGGHDYEGLSYRSEKPEPFAVVDMNKMRAVSIDGKAATAWVDSGAQLGDLYYGIAKASPKLGFPAGVCTTIGVGGHFSGGGFGMLLRKYGTAADNVIDAKVVDAQGRLLDRKAMGEDHFWAIRGGGGESFGIVASWQVKLLPVPPKVTVFQVHKGIKEGAIDLVTKWQTVAPALPDDLMIRIMAMGQGAMFEALYLGTCKDLVLLMTARFPELGMNATHCKEMTWIESVPYIPMGPKGTVRDLLNRTSNIKAFGKYKSDYVLEPIPKSDWEKIFTWLVKPGAGVMIMDPYGGGIASVPESATPFPRRSGVLFNIQYVVYWFGEGAAALPTQWTRDIYDFMTPYVSKNPRQAYVNYRDLDLGVNQVVGNVSTYASGKVWGEKYFKGNFERLARTKGKIDPEDYFRNEQSIPPLL.

A signal peptide spans 1–25 (MARSRAFAFALLICAVAASCHVALS). A disulfide bond links cysteine 41 and cysteine 98. The FAD-binding PCMH-type domain maps to 76-252 (KTVKPLYIIT…ASWQVKLLPV (177 aa)). N-linked (GlcNAc...) asparagine glycosylation is present at asparagine 88. FAD contacts are provided by residues 108–114 (VRSGGHD), serine 119, serine 152, 176–177 (VC), 181–185 (GVGGH), phenylalanine 191, glutamate 237, and valine 242. The segment at residues 113–177 (HDYEGLSYRS…PKLGFPAGVC (65 aa)) is a cross-link (6-(S-cysteinyl)-8alpha-(pros-histidyl)-FAD (His-Cys)). An intrachain disulfide couples cysteine 308 to cysteine 329. N-linked (GlcNAc...) asparagine glycosylation is found at asparagine 325 and asparagine 354. 461-465 (YVNYR) lines the FAD pocket. Asparagine 477 carries an N-linked (GlcNAc...) asparagine glycan.

This sequence belongs to the oxygen-dependent FAD-linked oxidoreductase family. In terms of assembly, monomer. It depends on FAD as a cofactor. The FAD cofactor is bound via a bicovalent 6-S-cysteinyl, 8alpha-N1-histidyl FAD linkage. In terms of processing, the N-terminus is blocked. Post-translationally, glycosylated. N-glycosylated. Contains fucose, N-acetylglucosamine, and mannose as main carbohydrates (in a ratio of approximately 3:2:1), and a minute amount of xylose. The two most abundant oligosaccharides are Fuc(1)GlcNAc(2)Man(3) and Fuc(1)GlcNAc(2)Man(2), together comprising about 80% of the total carbohydrate content. They are structurally unusual in having a L-Fuc alpha-(1,3)-linked to Asn-linked GlcNAc without a Xyl beta-(1,2)-linked to the branching Man. The other oligosaccharides make up only 9% of the total carbohydrate content and are characterized by the presence of Xyl beta-(1,2)-linked to the branching Man. In terms of tissue distribution, expressed in pollen (at protein level).

The sequence is that of Berberine bridge enzyme-like Cyn d 4 from Cynodon dactylon (Bermuda grass).